A 510-amino-acid polypeptide reads, in one-letter code: Ferredoxin--nitrite reductase (510 aa).

[4Fe-4S] cluster-binding residues include C396, C402, C437, and C441. Position 441 (C441) interacts with siroheme.

This sequence belongs to the nitrite and sulfite reductase 4Fe-4S domain family.

The enzyme catalyses 6 oxidized [2Fe-2S]-[ferredoxin] + NH4(+) + 2 H2O = nitrite + 6 reduced [2Fe-2S]-[ferredoxin] + 8 H(+). In Leptolyngbya laminosa (Phormidium laminosum), this protein is Ferredoxin--nitrite reductase (nirA).